The chain runs to 223 residues: Receptor-transporting protein 2 (223 aa).

The Cytoplasmic portion of the chain corresponds to 1–193; it reads MSTSLTTCEW…KKGQAGFISS (193 aa). Residues 52-161 form a 3CxxC-type zinc finger; it reads ASGRFHCSWC…SEFCEACQEG (110 aa). The helical transmembrane segment at 194 to 216 threads the bilayer; that stretch reads FFSFRWCLFWGTLCLVIVYLQFF. The Extracellular segment spans residues 217-223; that stretch reads RGRSGFL.

The protein belongs to the TMEM7 family. As to quaternary structure, interacts with olfactory receptors. In terms of tissue distribution, predominantly expressed in olfactory and vomeronasal organs, in mature olfactory sensory neurons.

It is found in the cell membrane. Its function is as follows. Specifically promotes functional cell surface expression of olfactory receptors, but not of other GPCRs. This is Receptor-transporting protein 2 (Rtp2) from Mus musculus (Mouse).